A 494-amino-acid chain; its full sequence is 1-aminocyclopropane-1-carboxylate synthase 2 (494 aa).

Lysine 279 carries the post-translational modification N6-(pyridoxal phosphate)lysine. Positions 474–494 (NVLNSPHTMSPHSPLVRARTY) are disordered. Over residues 475 to 484 (VLNSPHTMSP) the composition is skewed to polar residues.

Belongs to the class-I pyridoxal-phosphate-dependent aminotransferase family. As to quaternary structure, homodimer. It depends on pyridoxal 5'-phosphate as a cofactor.

The catalysed reaction is S-adenosyl-L-methionine = 1-aminocyclopropane-1-carboxylate + S-methyl-5'-thioadenosine + H(+). It functions in the pathway alkene biosynthesis; ethylene biosynthesis via S-adenosyl-L-methionine; ethylene from S-adenosyl-L-methionine: step 1/2. Functionally, catalyzes the formation of 1-aminocyclopropane-1-carboxylate, a direct precursor of ethylene in higher plants. The sequence is that of 1-aminocyclopropane-1-carboxylate synthase 2 (ACS2) from Cucurbita pepo (Vegetable marrow).